A 210-amino-acid chain; its full sequence is Probable molybdenum cofactor guanylyltransferase (210 aa).

Residues 18 to 20 (LAG), Lys31, Asn59, Asp86, and Asp111 each bind GTP. Asp111 provides a ligand contact to Mg(2+).

It belongs to the MobA family. Mg(2+) is required as a cofactor.

The protein localises to the cytoplasm. It catalyses the reaction Mo-molybdopterin + GTP + H(+) = Mo-molybdopterin guanine dinucleotide + diphosphate. In terms of biological role, transfers a GMP moiety from GTP to Mo-molybdopterin (Mo-MPT) cofactor (Moco or molybdenum cofactor) to form Mo-molybdopterin guanine dinucleotide (Mo-MGD) cofactor. The protein is Probable molybdenum cofactor guanylyltransferase (nasC) of Haloferax mediterranei (strain ATCC 33500 / DSM 1411 / JCM 8866 / NBRC 14739 / NCIMB 2177 / R-4) (Halobacterium mediterranei).